Here is a 233-residue protein sequence, read N- to C-terminus: ATP-dependent dethiobiotin synthetase BioD (233 aa).

Residue 12–17 participates in ATP binding; it reads GVGKTI. Thr16 contributes to the Mg(2+) binding site. Residue Lys37 is part of the active site. Ser41 is a substrate binding site. Residues Asp51, 112 to 115, and 202 to 204 contribute to the ATP site; these read EGAG and PKL. Mg(2+)-binding residues include Asp51 and Glu112.

The protein belongs to the dethiobiotin synthetase family. Homodimer. Mg(2+) is required as a cofactor.

The protein localises to the cytoplasm. It catalyses the reaction (7R,8S)-7,8-diammoniononanoate + CO2 + ATP = (4R,5S)-dethiobiotin + ADP + phosphate + 3 H(+). It participates in cofactor biosynthesis; biotin biosynthesis; biotin from 7,8-diaminononanoate: step 1/2. Functionally, catalyzes a mechanistically unusual reaction, the ATP-dependent insertion of CO2 between the N7 and N8 nitrogen atoms of 7,8-diaminopelargonic acid (DAPA, also called 7,8-diammoniononanoate) to form a ureido ring. This chain is ATP-dependent dethiobiotin synthetase BioD, found in Bacillus velezensis (strain DSM 23117 / BGSC 10A6 / LMG 26770 / FZB42) (Bacillus amyloliquefaciens subsp. plantarum).